The primary structure comprises 263 residues: 5'-nucleotidase SurE (263 aa).

4 residues coordinate a divalent metal cation: Asp-10, Asp-11, Ser-41, and Asn-95.

It belongs to the SurE nucleotidase family. A divalent metal cation is required as a cofactor.

The protein resides in the cytoplasm. The catalysed reaction is a ribonucleoside 5'-phosphate + H2O = a ribonucleoside + phosphate. In terms of biological role, nucleotidase that shows phosphatase activity on nucleoside 5'-monophosphates. In Methanoculleus marisnigri (strain ATCC 35101 / DSM 1498 / JR1), this protein is 5'-nucleotidase SurE.